The following is a 126-amino-acid chain: Aspartate 1-decarboxylase (126 aa).

Residue Ser-25 is the Schiff-base intermediate with substrate; via pyruvic acid of the active site. Ser-25 bears the Pyruvic acid (Ser) mark. Thr-57 contacts substrate. Tyr-58 serves as the catalytic Proton donor. 73–75 is a binding site for substrate; sequence GAA.

It belongs to the PanD family. As to quaternary structure, heterooctamer of four alpha and four beta subunits. Requires pyruvate as cofactor. In terms of processing, is synthesized initially as an inactive proenzyme, which is activated by self-cleavage at a specific serine bond to produce a beta-subunit with a hydroxyl group at its C-terminus and an alpha-subunit with a pyruvoyl group at its N-terminus.

It localises to the cytoplasm. The catalysed reaction is L-aspartate + H(+) = beta-alanine + CO2. The protein operates within cofactor biosynthesis; (R)-pantothenate biosynthesis; beta-alanine from L-aspartate: step 1/1. In terms of biological role, catalyzes the pyruvoyl-dependent decarboxylation of aspartate to produce beta-alanine. This Salmonella dublin (strain CT_02021853) protein is Aspartate 1-decarboxylase.